Consider the following 364-residue polypeptide: GDSL esterase/lipase 7 (364 aa).

An N-terminal signal peptide occupies residues 1–19; that stretch reads MKSLLICLVLLELVWLGNG. Serine 37 acts as the Nucleophile in catalysis. N-linked (GlcNAc...) asparagine glycans are attached at residues asparagine 236, asparagine 237, and asparagine 264. Active-site residues include aspartate 329 and histidine 332. Asparagine 351 carries N-linked (GlcNAc...) asparagine glycosylation.

The protein belongs to the 'GDSL' lipolytic enzyme family.

The protein resides in the secreted. This Arabidopsis thaliana (Mouse-ear cress) protein is GDSL esterase/lipase 7 (GLIP7).